The following is a 302-amino-acid chain: Haloalkane dehalogenase (302 aa).

Residues 48 to 152 form the AB hydrolase-1 domain; that stretch reads PILLMHGEPS…VVVSNTGLPI (105 aa). The Nucleophile role is filled by D123. The active-site Proton donor is the D249. Catalysis depends on H278, which acts as the Proton acceptor.

The protein belongs to the haloalkane dehalogenase family. Type 1 subfamily. In terms of assembly, monomer.

The enzyme catalyses 1-haloalkane + H2O = a halide anion + a primary alcohol + H(+). In terms of biological role, catalyzes hydrolytic cleavage of carbon-halogen bonds in halogenated aliphatic compounds, leading to the formation of the corresponding primary alcohols, halide ions and protons. This chain is Haloalkane dehalogenase, found in Caulobacter vibrioides (strain ATCC 19089 / CIP 103742 / CB 15) (Caulobacter crescentus).